The primary structure comprises 546 residues: Chaperonin GroEL (546 aa).

Residues 30 to 33 (TLGP), Lys-51, 87 to 91 (DGTTT), Gly-415, 479 to 481 (NAA), and Asp-495 contribute to the ATP site.

It belongs to the chaperonin (HSP60) family. As to quaternary structure, forms a cylinder of 14 subunits composed of two heptameric rings stacked back-to-back. Interacts with the co-chaperonin GroES.

It localises to the cytoplasm. The catalysed reaction is ATP + H2O + a folded polypeptide = ADP + phosphate + an unfolded polypeptide.. In terms of biological role, together with its co-chaperonin GroES, plays an essential role in assisting protein folding. The GroEL-GroES system forms a nano-cage that allows encapsulation of the non-native substrate proteins and provides a physical environment optimized to promote and accelerate protein folding. This is Chaperonin GroEL from Bordetella avium (strain 197N).